The chain runs to 113 residues: UPF0482 protein KPN78578_15540 (113 aa).

Residues 1-28 form the signal peptide; it reads MNMTLNKRWCLTAILALSAVVYTSSSYA. Positions 38 to 60 are disordered; the sequence is GDSAQSRQQASMEKEQWNDTRSL. The span at 39-48 shows a compositional bias: polar residues; that stretch reads DSAQSRQQAS. Positions 49–59 are enriched in basic and acidic residues; that stretch reads MEKEQWNDTRS.

This sequence belongs to the UPF0482 family.

The chain is UPF0482 protein KPN78578_15540 from Klebsiella pneumoniae subsp. pneumoniae (strain ATCC 700721 / MGH 78578).